Consider the following 144-residue polypeptide: Maximins 11/H1 (144 aa).

An N-terminal signal peptide occupies residues 1-18 (MNFKYIVAVSFLIASAYA). The propeptide occupies 19 to 43 (RSEENDEQSLSQRDVLEEESLREIR). Asparagine amide is present on Asn-70. Positions 74-123 (TAEDHEVMKRLEAVMRDLDSLDYPEEASERETRGFNQEEIANLFTKKEKR) are excised as a propeptide. Leu-143 is modified (leucine amide).

Belongs to the bombinin family. In terms of tissue distribution, expressed by the skin glands.

It is found in the secreted. Maximin-11 shows antimicrobial activity against bacteria and against the fungus C.albicans. It has little hemolytic activity. In terms of biological role, maximin-H1 shows antibacterial activity against both Gram-positive and Gram-negative bacteria. It also shows antimicrobial activity against the fungus C.albicans. Shows strong hemolytic activity. This chain is Maximins 11/H1, found in Bombina maxima (Giant fire-bellied toad).